Here is a 178-residue protein sequence, read N- to C-terminus: Oligoribonuclease (178 aa).

Residues 7 to 168 enclose the Exonuclease domain; it reads LIWIDLEMTG…DDIRESIAEL (162 aa). Tyr128 is a catalytic residue.

The protein belongs to the oligoribonuclease family.

The protein localises to the cytoplasm. Its function is as follows. 3'-to-5' exoribonuclease specific for small oligoribonucleotides. This chain is Oligoribonuclease, found in Francisella tularensis subsp. holarctica (strain OSU18).